Reading from the N-terminus, the 305-residue chain is GMP synthase [glutamine-hydrolyzing] subunit B (305 aa).

Positions 2 to 184 (VKPEKFIPKA…LKLPDEICER (183 aa)) constitute a GMPS ATP-PPase domain. 29–35 (SGGVDSS) is a binding site for ATP.

In terms of assembly, heterodimer composed of a glutamine amidotransferase subunit (A) and a GMP-binding subunit (B).

The catalysed reaction is XMP + L-glutamine + ATP + H2O = GMP + L-glutamate + AMP + diphosphate + 2 H(+). It functions in the pathway purine metabolism; GMP biosynthesis; GMP from XMP (L-Gln route): step 1/1. Catalyzes the synthesis of GMP from XMP. This chain is GMP synthase [glutamine-hydrolyzing] subunit B, found in Methanosarcina barkeri (strain Fusaro / DSM 804).